We begin with the raw amino-acid sequence, 472 residues long: WD repeat-containing protein 88 (472 aa).

Residues Met1–Ser22 form a disordered region. WD repeat units follow at residues Gly100 to Asp139, Arg143 to Lys182, Arg184 to Val224, His228 to Thr267, Ala271 to Cys310, Gly319 to Ser358, and Gly361 to Leu400. The segment at Leu447–Asp472 is disordered. A compositionally biased stretch (basic and acidic residues) spans Ser458–Asp472.

The protein is WD repeat-containing protein 88 (WDR88) of Homo sapiens (Human).